The primary structure comprises 493 residues: EGF-containing fibulin-like extracellular matrix protein 1 (493 aa).

A signal peptide spans 1-17 (MLKALFLTMLTLALVKS). One can recognise an EGF-like 1; atypical domain in the interval 26–71 (YTQCTDGYEWDPVRQQCKDIDECDIVPDACKGGMKCVNHYGGYLCL). The region spanning 173 to 213 (DIDECTAGTHNCRADQVCINLRGSFACQCPPGYQKRGEQCV) is the EGF-like 2; calcium-binding domain. 15 disulfide bridges follow: Cys-177-Cys-190, Cys-184-Cys-199, Cys-201-Cys-212, Cys-218-Cys-228, Cys-224-Cys-237, Cys-239-Cys-252, Cys-258-Cys-268, Cys-264-Cys-277, Cys-279-Cys-292, Cys-298-Cys-309, Cys-305-Cys-318, Cys-320-Cys-332, Cys-338-Cys-350, Cys-344-Cys-359, and Cys-365-Cys-377. The EGF-like 3; calcium-binding domain occupies 214–253 (DIDECTIPPYCHQRCVNTPGSFYCQCSPGFQLAANNYTCV). An N-linked (GlcNAc...) asparagine glycan is attached at Asn-249. An EGF-like 4; calcium-binding domain is found at 254–293 (DINECDASNQCAQQCYNILGSFICQCNQGYELSSDRLNCE). The interval 259 to 493 (DASNQCAQQC…LTIIVGPFSF (235 aa)) is mediates interaction with TIMP3. Residues 294-333 (DIDECRTSSYLCQYQCVNEPGKFSCMCPQGYQVVRSRTCQ) enclose the EGF-like 5; calcium-binding domain. Positions 334-378 (DINECETTNECREDEMCWNYHGGFRCYPRNPCQDPYILTPENRCV) constitute an EGF-like 6; calcium-binding domain.

It belongs to the fibulin family. Interacts with ECM1. Interacts with TIMP3. In terms of tissue distribution, in the eye, associated with photoreceptor outer and inner segment regions, the nerve fiber layer, outer nuclear layer and inner and outer plexiform layers of the retina.

The protein resides in the secreted. It localises to the extracellular space. It is found in the extracellular matrix. Its function is as follows. Binds EGFR, the EGF receptor, inducing EGFR autophosphorylation and the activation of downstream signaling pathways. May play a role in cell adhesion and migration. May function as a negative regulator of chondrocyte differentiation. In the olfactory epithelium, it may regulate glial cell migration, differentiation and the ability of glial cells to support neuronal neurite outgrowth. The sequence is that of EGF-containing fibulin-like extracellular matrix protein 1 (EFEMP1) from Homo sapiens (Human).